Reading from the N-terminus, the 82-residue chain is Defensin-like protein 156 (82 aa).

Residues 1-27 (MAKISCSYFLVLMLVFSVFSLVEKTKG) form the signal peptide. 4 disulfides stabilise this stretch: cysteine 31–cysteine 77, cysteine 41–cysteine 60, cysteine 46–cysteine 71, and cysteine 50–cysteine 73.

Belongs to the DEFL family. As to expression, expressed in flower buds, but not in stems, roots or rosette leaves.

It is found in the secreted. The protein is Defensin-like protein 156 (LCR21) of Arabidopsis thaliana (Mouse-ear cress).